The following is a 510-amino-acid chain: Rab proteins geranylgeranyltransferase component A 1 (510 aa).

It belongs to the Rab GDI family. In terms of assembly, may interact with rab-5, rab-7 and rab-11. Does not interact with rab-3, rab-27 and rab-10. As to expression, expressed in several neurons including head neurons, motor neurons located in the ventral nerve cord, HSN and CAN neurons, and tail neurons, and in muscles such as body-wall, pharyngeal, intestinal and anal sphincter. Also expressed in seam cells, the hypodermis and the intestine.

It is found in the cytoplasm. In terms of biological role, substrate-binding subunit of the Rab geranylgeranyltransferase (GGTase) complex. Binds unprenylated Rab proteins and presents the substrate peptide to the catalytic component B and remains bound to it after the geranylgeranyl transfer reaction. The component A is thought to be regenerated by transferring its prenylated Rab back to the donor membrane. Plays a role in neurotransmitter release from presynaptic terminals at neuromuscular junctions. Positively regulates the function of rab-27 in synaptic transmission most likely through mediating rab-27 prenylation. The protein is Rab proteins geranylgeranyltransferase component A 1 of Caenorhabditis elegans.